Here is a 212-residue protein sequence, read N- to C-terminus: ER lumen protein-retaining receptor 2 (212 aa).

The Lumenal portion of the chain corresponds to 1-4 (MNIF). A helical membrane pass occupies residues 5 to 24 (RLTGDLSHLAAIVILLLKIW). Over 25 to 32 (KTRSCAGI) the chain is Cytoplasmic. A helical membrane pass occupies residues 33–52 (SGKSQLLFALVFTTRYLDLF). The interaction with the K-D-E-L motif on target proteins stretch occupies residues 47–48 (RY). The Lumenal segment spans residues 53–58 (TSFISL). The chain crosses the membrane as a helical span at residues 59–79 (YNTSMKLIYIACSYATVYLIY). At 80-92 (MKFKATYDGNHDT) the chain is on the cytoplasmic side. Residues 93–110 (FRVEFLVVPVGGLSFLVN) traverse the membrane as a helical segment. The Lumenal segment spans residues 111-116 (HDFSPL). Residues 117 to 135 (EILWTFSIYLESVAILPQL) traverse the membrane as a helical segment. Over 136 to 149 (FMISKTGEAETITT) the chain is Cytoplasmic. Residues 150–168 (HYLFFLGLYRALYLVNWIW) traverse the membrane as a helical segment. The segment at 159–169 (RALYLVNWIWR) is interaction with the K-D-E-L motif on target proteins. Residues 169–178 (RFYFEGFFDL) lie on the Lumenal side of the membrane. The helical transmembrane segment at 179 to 199 (IAVVAGVVQTILYCDFFYLYI) threads the bilayer. Residues 200–212 (TKVLKGKKLSLPA) are Cytoplasmic-facing. Positions 204–207 (KGKK) are important for recycling of cargo proteins with the sequence motif K-D-E-L from the Golgi to the endoplasmic reticulum.

The protein belongs to the ERD2 family.

It localises to the endoplasmic reticulum membrane. Its subcellular location is the golgi apparatus membrane. It is found in the cytoplasmic vesicle. The protein localises to the COPI-coated vesicle membrane. In terms of biological role, membrane receptor that binds the K-D-E-L sequence motif in the C-terminal part of endoplasmic reticulum resident proteins and maintains their localization in that compartment by participating to their vesicle-mediated recycling back from the Golgi. Binding is pH dependent, and is optimal at pH 5-5.4. The sequence is that of ER lumen protein-retaining receptor 2 (Kdelr2) from Mus musculus (Mouse).